A 446-amino-acid polypeptide reads, in one-letter code: Glutamyl-tRNA reductase (446 aa).

Residues 49–52 (TCNR), S109, 114–116 (ETQ), and Q120 each bind substrate. C50 acts as the Nucleophile in catalysis. NADP(+) is bound at residue 189–194 (GAGEMA).

The protein belongs to the glutamyl-tRNA reductase family. Homodimer.

It carries out the reaction (S)-4-amino-5-oxopentanoate + tRNA(Glu) + NADP(+) = L-glutamyl-tRNA(Glu) + NADPH + H(+). It participates in porphyrin-containing compound metabolism; protoporphyrin-IX biosynthesis; 5-aminolevulinate from L-glutamyl-tRNA(Glu): step 1/2. Functionally, catalyzes the NADPH-dependent reduction of glutamyl-tRNA(Glu) to glutamate 1-semialdehyde (GSA). The polypeptide is Glutamyl-tRNA reductase (Macrococcus caseolyticus (strain JCSC5402) (Macrococcoides caseolyticum)).